The following is a 694-amino-acid chain: Elongation factor G (694 aa).

In terms of domain architecture, tr-type G spans 8 to 287; that stretch reads EDYRNFGIMA…AVVEFLPAPT (280 aa). Residues 17-24, 86-90, and 140-143 each bind GTP; these read AHIDAGKT, DTPGH, and NKMD.

The protein belongs to the TRAFAC class translation factor GTPase superfamily. Classic translation factor GTPase family. EF-G/EF-2 subfamily.

It is found in the cytoplasm. Its function is as follows. Catalyzes the GTP-dependent ribosomal translocation step during translation elongation. During this step, the ribosome changes from the pre-translocational (PRE) to the post-translocational (POST) state as the newly formed A-site-bound peptidyl-tRNA and P-site-bound deacylated tRNA move to the P and E sites, respectively. Catalyzes the coordinated movement of the two tRNA molecules, the mRNA and conformational changes in the ribosome. In Brucella canis (strain ATCC 23365 / NCTC 10854 / RM-666), this protein is Elongation factor G.